Here is a 257-residue protein sequence, read N- to C-terminus: Aspartate/glutamate leucyltransferase (257 aa).

It belongs to the R-transferase family. Bpt subfamily.

The protein resides in the cytoplasm. It carries out the reaction N-terminal L-glutamyl-[protein] + L-leucyl-tRNA(Leu) = N-terminal L-leucyl-L-glutamyl-[protein] + tRNA(Leu) + H(+). The enzyme catalyses N-terminal L-aspartyl-[protein] + L-leucyl-tRNA(Leu) = N-terminal L-leucyl-L-aspartyl-[protein] + tRNA(Leu) + H(+). Functionally, functions in the N-end rule pathway of protein degradation where it conjugates Leu from its aminoacyl-tRNA to the N-termini of proteins containing an N-terminal aspartate or glutamate. The protein is Aspartate/glutamate leucyltransferase of Rhodopseudomonas palustris (strain BisB5).